The following is a 526-amino-acid chain: Bifunctional purine biosynthesis protein PurH (526 aa).

Residues 1-149 enclose the MGS-like domain; the sequence is MLHSLPIRRA…KNHEAVTVVV (149 aa).

This sequence belongs to the PurH family.

It catalyses the reaction (6R)-10-formyltetrahydrofolate + 5-amino-1-(5-phospho-beta-D-ribosyl)imidazole-4-carboxamide = 5-formamido-1-(5-phospho-D-ribosyl)imidazole-4-carboxamide + (6S)-5,6,7,8-tetrahydrofolate. The enzyme catalyses IMP + H2O = 5-formamido-1-(5-phospho-D-ribosyl)imidazole-4-carboxamide. It participates in purine metabolism; IMP biosynthesis via de novo pathway; 5-formamido-1-(5-phospho-D-ribosyl)imidazole-4-carboxamide from 5-amino-1-(5-phospho-D-ribosyl)imidazole-4-carboxamide (10-formyl THF route): step 1/1. Its pathway is purine metabolism; IMP biosynthesis via de novo pathway; IMP from 5-formamido-1-(5-phospho-D-ribosyl)imidazole-4-carboxamide: step 1/1. The protein is Bifunctional purine biosynthesis protein PurH of Rhodospirillum rubrum (strain ATCC 11170 / ATH 1.1.1 / DSM 467 / LMG 4362 / NCIMB 8255 / S1).